The primary structure comprises 504 residues: Lysine--tRNA ligase (504 aa).

The Mg(2+) site is built by glutamate 404 and glutamate 411.

This sequence belongs to the class-II aminoacyl-tRNA synthetase family. Homodimer. Requires Mg(2+) as cofactor.

Its subcellular location is the cytoplasm. The enzyme catalyses tRNA(Lys) + L-lysine + ATP = L-lysyl-tRNA(Lys) + AMP + diphosphate. This Aliarcobacter butzleri (strain RM4018) (Arcobacter butzleri) protein is Lysine--tRNA ligase.